Here is a 570-residue protein sequence, read N- to C-terminus: Protein misato homolog 1 (570 aa).

Ser-495 bears the Phosphoserine mark.

It belongs to the misato family. Present in all cell lines tested (at protein level). Widely expressed.

The protein resides in the mitochondrion outer membrane. The protein localises to the cytoplasm. Involved in the regulation of mitochondrial distribution and morphology. Required for mitochondrial fusion and mitochondrial network formation. The protein is Protein misato homolog 1 (MSTO1) of Homo sapiens (Human).